The sequence spans 131 residues: Large ribosomal subunit protein bL12 (131 aa).

It belongs to the bacterial ribosomal protein bL12 family. In terms of assembly, homodimer. Part of the ribosomal stalk of the 50S ribosomal subunit. Forms a multimeric L10(L12)X complex, where L10 forms an elongated spine to which 2 to 4 L12 dimers bind in a sequential fashion. Binds GTP-bound translation factors.

Forms part of the ribosomal stalk which helps the ribosome interact with GTP-bound translation factors. Is thus essential for accurate translation. In Prochlorococcus marinus (strain MIT 9215), this protein is Large ribosomal subunit protein bL12.